A 24-amino-acid polypeptide reads, in one-letter code: Brevinin-1Ra (24 aa).

Residues C18 and C24 are joined by a disulfide bond.

As to expression, expressed by the skin glands.

It localises to the secreted. Antimicrobial peptide. The chain is Brevinin-1Ra from Pelophylax ridibundus (Marsh frog).